The following is a 315-amino-acid chain: Olfactory receptor 8J2 (315 aa).

Over 1 to 24 (MASGNLTWVTEFILVGVSDDPELQ) the chain is Extracellular. Asparagine 5 carries N-linked (GlcNAc...) asparagine glycosylation. The helical transmembrane segment at 25 to 45 (IPLFLVFLVLYLLTVAGNLGI) threads the bilayer. The Cytoplasmic portion of the chain corresponds to 46 to 57 (ITLTSVDPQLQT). A helical transmembrane segment spans residues 58–78 (PMYFFLRHLAIINLCNSTVVA). The Extracellular portion of the chain corresponds to 79 to 97 (PKMLVNFLVTKKTISYYGC). Cysteines 97 and 179 form a disulfide. A helical transmembrane segment spans residues 98 to 118 (AAQLGGFLVFIVAEIFTLAAM). The Cytoplasmic portion of the chain corresponds to 119–143 (AYDRYVAIWSPLLYAVVVSPKVCRL). Residues 144-164 (LVSLTYLQSLITALTVSSCVF) traverse the membrane as a helical segment. Residues 165-205 (SVSYCSSNIINHFYCDDVPLLALSCSDTYIPETAVFIFSGT) are Extracellular-facing. A helical transmembrane segment spans residues 206 to 226 (NLLFSMIVVLISYFNIVITIL). Topologically, residues 227 to 239 (RIRSSEGRQKAFS) are cytoplasmic. A helical membrane pass occupies residues 240–260 (TCASHMIAVVVFYGTLLFMYL). Over 261-271 (QPRSNHSLDTD) the chain is Extracellular. Asparagine 265 is a glycosylation site (N-linked (GlcNAc...) asparagine). Residues 272–292 (KMASVFYTLVIPVLNPLIYSL) form a helical membrane-spanning segment. The Cytoplasmic segment spans residues 293 to 315 (RNKNVKDALKRFLDNPCRSLKLM).

The protein belongs to the G-protein coupled receptor 1 family.

The protein resides in the membrane. Functionally, odorant receptor. The sequence is that of Olfactory receptor 8J2 (OR8J2) from Homo sapiens (Human).